Here is a 1755-residue protein sequence, read N- to C-terminus: Transposon Ty1-ML1 Gag-Pol polyprotein (1755 aa).

Composition is skewed to polar residues over residues 1–23 (MESQ…SVTS), 48–60 (TKAN…TPAS), and 127–152 (QSQF…GNTF). 3 disordered regions span residues 1-88 (MESQ…YPQQ), 126-173 (PQSQ…RPPP), and 352-421 (GSRN…SKST). Positions 153–165 (TDSSSADSDMTST) are enriched in low complexity. The tract at residues 299-401 (NNGIHINNKV…NSKSKTARAH (103 aa)) is RNA-binding. Residues 402-418 (NVSTSNNSPSTDNDSIS) are compositionally biased toward low complexity. The active-site For protease activity; shared with dimeric partner is Asp-461. The integrase-type zinc finger-like stretch occupies residues 583-640 (NVHTSESTRKYPYPFIHRMLAHANAQTIRYSLKNNTITYFNESDVDWSSAIDYQCPDC). The 176-residue stretch at 660–835 (NSYEPFQYLH…AGLDISTLLP (176 aa)) folds into the Integrase catalytic domain. The Mg(2+) site is built by Asp-671 and Asp-736. 3 disordered regions span residues 956–1087 (SKAV…ETEK), 1092–1111 (RSPS…NIVP), and 1130–1171 (DLPL…DSNA). The segment covering 960-969 (SPTDSTPPST) has biased composition (low complexity). The span at 1005-1015 (STPQISNIEST) shows a compositional bias: polar residues. Over residues 1038–1053 (ESSHASKSKDFRHSDS) the composition is skewed to basic and acidic residues. 2 stretches are compositionally biased toward polar residues: residues 1054–1082 (YSEN…QISD) and 1101–1111 (PENNSSHNIVP). A Bipartite nuclear localization signal motif is present at residues 1178–1212 (KKRSLEDNETEIKVSRDTWNTKNMRSLEPPRSKKR). One can recognise a Reverse transcriptase Ty1/copia-type domain in the interval 1338-1476 (NNYYITQLDI…DILGLEIKYQ (139 aa)). Positions 1346, 1427, 1428, 1610, 1652, and 1685 each coordinate Mg(2+). Positions 1610–1752 (DASYGNQPYY…IKTFKLLTNK (143 aa)) constitute an RNase H Ty1/copia-type domain.

As to quaternary structure, the capsid protein forms a homotrimer, from which the VLPs are assembled. The protease is a homodimer, whose active site consists of two apposed aspartic acid residues. Initially, virus-like particles (VLPs) are composed of the structural unprocessed proteins Gag and Gag-Pol, and also contain the host initiator methionine tRNA (tRNA(i)-Met) which serves as a primer for minus-strand DNA synthesis, and a dimer of genomic Ty RNA. Processing of the polyproteins occurs within the particle and proceeds by an ordered pathway, called maturation. First, the protease (PR) is released by autocatalytic cleavage of the Gag-Pol polyprotein yielding capsid protein p45 and a Pol-p154 precursor protein. This cleavage is a prerequisite for subsequent processing of Pol-p154 at the remaining sites to release the mature structural and catalytic proteins. Maturation takes place prior to the RT reaction and is required to produce transposition-competent VLPs.

It is found in the cytoplasm. Its subcellular location is the nucleus. The catalysed reaction is DNA(n) + a 2'-deoxyribonucleoside 5'-triphosphate = DNA(n+1) + diphosphate. It carries out the reaction Endonucleolytic cleavage to 5'-phosphomonoester.. Capsid protein (CA) is the structural component of the virus-like particle (VLP), forming the shell that encapsulates the retrotransposons dimeric RNA genome. The particles are assembled from trimer-clustered units and there are holes in the capsid shells that allow for the diffusion of macromolecules. CA also has nucleocapsid-like chaperone activity, promoting primer tRNA(i)-Met annealing to the multipartite primer-binding site (PBS), dimerization of Ty1 RNA and initiation of reverse transcription. Functionally, the aspartyl protease (PR) mediates the proteolytic cleavages of the Gag and Gag-Pol polyproteins after assembly of the VLP. Its function is as follows. Reverse transcriptase/ribonuclease H (RT) is a multifunctional enzyme that catalyzes the conversion of the retro-elements RNA genome into dsDNA within the VLP. The enzyme displays a DNA polymerase activity that can copy either DNA or RNA templates, and a ribonuclease H (RNase H) activity that cleaves the RNA strand of RNA-DNA heteroduplexes during plus-strand synthesis and hydrolyzes RNA primers. The conversion leads to a linear dsDNA copy of the retrotransposon that includes long terminal repeats (LTRs) at both ends. In terms of biological role, integrase (IN) targets the VLP to the nucleus, where a subparticle preintegration complex (PIC) containing at least integrase and the newly synthesized dsDNA copy of the retrotransposon must transit the nuclear membrane. Once in the nucleus, integrase performs the integration of the dsDNA into the host genome. This chain is Transposon Ty1-ML1 Gag-Pol polyprotein (TY1B-ML1), found in Saccharomyces cerevisiae (strain ATCC 204508 / S288c) (Baker's yeast).